A 616-amino-acid chain; its full sequence is Leucine aminopeptidase (616 aa).

Substrate is bound by residues 128 to 130 (QCQ) and 282 to 286 (GGMEN). Residue His-309 coordinates Zn(2+). Catalysis depends on Glu-310, which acts as the Proton acceptor. Residues His-313 and Glu-332 each contribute to the Zn(2+) site. Tyr-397 serves as the catalytic Proton donor. Substrate is bound at residue 566 to 568 (RMK).

This sequence belongs to the peptidase M1 family. Zn(2+) serves as cofactor.

Its subcellular location is the cytoplasm. The enzyme catalyses an epoxide + H2O = an ethanediol. In terms of biological role, aminopeptidase that preferentially cleaves di- and tripeptides. Also has low epoxide hydrolase activity (in vitro). Can hydrolyze the epoxide leukotriene LTA(4) but it forms preferentially 5,6-dihydroxy-7,9,11,14-eicosatetraenoic acid rather than the cytokine leukotriene B(4) as the product compared to the homologous mammalian enzyme (in vitro). The protein is Leucine aminopeptidase (LKHA4) of Arabidopsis thaliana (Mouse-ear cress).